Consider the following 228-residue polypeptide: MSKSHLLKYLLISPNLPVGGFCYSEGMESYLHNKNLIDSNSVKDLIINELKIGQIRLDARLLLDFFDIFDEINEGKNLKGNLHKLMSLDKWILSSKDTLEIREQQIQMAKSLFDLTKEFGFEYLCKNNKKSSWPLAWSWACYCFKITKLEMIENFFYSWSANQLSAALRIIPIGATKAQLIQRDLLAIISKVSKEIMDKEIDDIYFGNVGLAMAQQNHNDLYTKLFRN.

It belongs to the UreF family. UreD, UreF and UreG form a complex that acts as a GTP-hydrolysis-dependent molecular chaperone, activating the urease apoprotein by helping to assemble the nickel containing metallocenter of UreC. The UreE protein probably delivers the nickel.

Its subcellular location is the cytoplasm. Its function is as follows. Required for maturation of urease via the functional incorporation of the urease nickel metallocenter. The protein is Urease accessory protein UreF of Prochlorococcus marinus (strain AS9601).